The chain runs to 87 residues: Phosphoribosyl-ATP pyrophosphatase (87 aa).

The protein belongs to the PRA-PH family.

It localises to the cytoplasm. The catalysed reaction is 1-(5-phospho-beta-D-ribosyl)-ATP + H2O = 1-(5-phospho-beta-D-ribosyl)-5'-AMP + diphosphate + H(+). The protein operates within amino-acid biosynthesis; L-histidine biosynthesis; L-histidine from 5-phospho-alpha-D-ribose 1-diphosphate: step 2/9. The chain is Phosphoribosyl-ATP pyrophosphatase from Saccharopolyspora erythraea (strain ATCC 11635 / DSM 40517 / JCM 4748 / NBRC 13426 / NCIMB 8594 / NRRL 2338).